The primary structure comprises 199 residues: Peroxiredoxin-1 (199 aa).

The Thioredoxin domain maps to 6 to 165; it reads AFIGKPAPDF…TLRLVQAFQF (160 aa). The active-site Cysteine sulfenic acid (-SOH) intermediate is Cys-52.

It belongs to the peroxiredoxin family. AhpC/Prx1 subfamily. As to quaternary structure, homodimer; disulfide-linked, upon oxidation. 5 homodimers assemble to form a ring-like decamer. Interacts with GDPD5; forms a mixed-disulfide with GDPD5. Interacts with SESN1 and SESN2. The enzyme can be inactivated by further oxidation of the cysteine sulfenic acid (C(P)-SOH) to sulphinic acid (C(P)-SO2H) instead of its condensation to a disulfide bond. It can be reactivated by forming a transient disulfide bond with sulfiredoxin SRXN1, which reduces the cysteine sulfinic acid in an ATP- and Mg-dependent manner.

The protein localises to the cytoplasm. The enzyme catalyses a hydroperoxide + [thioredoxin]-dithiol = an alcohol + [thioredoxin]-disulfide + H2O. In terms of biological role, thiol-specific peroxidase that catalyzes the reduction of hydrogen peroxide and organic hydroperoxides to water and alcohols, respectively. Plays a role in cell protection against oxidative stress by detoxifying peroxides and as sensor of hydrogen peroxide-mediated signaling events. Might participate in the signaling cascades of growth factors and tumor necrosis factor-alpha by regulating the intracellular concentrations of H(2)O(2). Reduces an intramolecular disulfide bond in GDPD5 that gates the ability to GDPD5 to drive postmitotic motor neuron differentiation. In Gallus gallus (Chicken), this protein is Peroxiredoxin-1 (PRDX1).